The primary structure comprises 226 residues: Potassium/proton antiporter CemA (226 aa).

The next 3 membrane-spanning stretches (helical) occupy residues 7–27, 111–131, and 186–206; these read FTSL…SLSF, IICF…LFIL, and IISG…KYWI.

This sequence belongs to the CemA family.

It localises to the plastid. The protein resides in the chloroplast inner membrane. It catalyses the reaction K(+)(in) + H(+)(out) = K(+)(out) + H(+)(in). Its function is as follows. Contributes to K(+)/H(+) antiport activity by supporting proton efflux to control proton extrusion and homeostasis in chloroplasts in a light-dependent manner to modulate photosynthesis. Prevents excessive induction of non-photochemical quenching (NPQ) under continuous-light conditions. Indirectly promotes efficient inorganic carbon uptake into chloroplasts. This is Potassium/proton antiporter CemA from Buxus microphylla (Littleleaf boxwood).